Here is a 762-residue protein sequence, read N- to C-terminus: Palmitoyltransferase ZDHHC8 (762 aa).

The Cytoplasmic segment spans residues 1 to 13 (MPRSPGTRLKPAK). The helical transmembrane segment at 14-34 (YIPVATAAALLVGSSTLFFVF) threads the bilayer. Topologically, residues 35–52 (TCPWLTRAVSPAIPVYNG) are lumenal. A helical membrane pass occupies residues 53–73 (ILFLFVLANFSMATFMDPGVF). Residues 74-148 (PRADEDEDKE…NCIGRRNYRY (75 aa)) are Cytoplasmic-facing. A DHHC domain is found at 104 to 154 (KWCATCHFYRPPRCSHCSVCDNCVEDFDHHCPWVNNCIGRRNYRYFFLFLL). C134 acts as the S-palmitoyl cysteine intermediate in catalysis. A helical membrane pass occupies residues 149 to 169 (FFLFLLSLSAHMVGVVAFGLL). Residues 170-190 (YVLNHSEGLGAAHTTITMAVM) lie on the Lumenal side of the membrane. Residues 191–211 (CVAGLFFIPVIGLTGFHVVLV) traverse the membrane as a helical segment. Over 212-762 (TRGRTTNEQV…VGGTTYEISV (551 aa)) the chain is Cytoplasmic. 4 disordered regions span residues 289-350 (GLKA…PPTP), 362-423 (GPKT…TTDA), 436-537 (ASRR…SPVR), and 551-574 (ERKD…GDSG). At S335 the chain carries Phosphoserine. Residues 408–417 (LRPPYPPSPP) show a composition bias toward pro residues. Omega-N-methylarginine is present on R439. Positions 471-485 (RNGSLSYDSLLNPGS) are enriched in polar residues. Pro residues predominate over residues 511–521 (PSDPPRPPPRS). A compositionally biased stretch (basic and acidic residues) spans 551–562 (ERKDREERERLL). A phosphoserine mark is found at S603 and S624. A compositionally biased stretch (low complexity) spans 626 to 644 (SSLSSSMSRAPRTSSSSLQ). Disordered stretches follow at residues 626–684 (SSLS…SYTG) and 707–744 (DHPQ…PARH). S672, S679, S722, and S740 each carry phosphoserine.

It belongs to the DHHC palmitoyltransferase family. ERF2/ZDHHC9 subfamily. Expressed in brain cortex and hippocampus.

It localises to the golgi apparatus membrane. The protein localises to the mitochondrion membrane. It carries out the reaction L-cysteinyl-[protein] + hexadecanoyl-CoA = S-hexadecanoyl-L-cysteinyl-[protein] + CoA. Its function is as follows. Palmitoyltransferase that catalyzes the addition of palmitate onto various protein substrates and therefore functions in several unrelated biological processes. Through the palmitoylation of ABCA1 regulates the localization of the transporter to the plasma membrane and thereby regulates its function in cholesterol and phospholipid efflux. Could also pamitoylate the D(2) dopamine receptor DRD2 and regulate its stability and localization to the plasma membrane. Could also play a role in glutamatergic transmission. The sequence is that of Palmitoyltransferase ZDHHC8 from Mus musculus (Mouse).